Here is a 471-residue protein sequence, read N- to C-terminus: Glutamate--tRNA ligase 1 (471 aa).

The 'HIGH' region motif lies at 15-25 (PSPTGYLHIGG). The short motif at 243 to 247 (KLSKR) is the 'KMSKS' region element. Position 246 (lysine 246) interacts with ATP.

The protein belongs to the class-I aminoacyl-tRNA synthetase family. Glutamate--tRNA ligase type 1 subfamily. Monomer.

The protein localises to the cytoplasm. It carries out the reaction tRNA(Glu) + L-glutamate + ATP = L-glutamyl-tRNA(Glu) + AMP + diphosphate. In terms of biological role, catalyzes the attachment of glutamate to tRNA(Glu) in a two-step reaction: glutamate is first activated by ATP to form Glu-AMP and then transferred to the acceptor end of tRNA(Glu). This Cereibacter sphaeroides (strain ATCC 17023 / DSM 158 / JCM 6121 / CCUG 31486 / LMG 2827 / NBRC 12203 / NCIMB 8253 / ATH 2.4.1.) (Rhodobacter sphaeroides) protein is Glutamate--tRNA ligase 1.